The primary structure comprises 186 residues: Translation initiation factor IF-3 (186 aa).

The protein belongs to the IF-3 family. In terms of assembly, monomer.

It is found in the cytoplasm. In terms of biological role, IF-3 binds to the 30S ribosomal subunit and shifts the equilibrium between 70S ribosomes and their 50S and 30S subunits in favor of the free subunits, thus enhancing the availability of 30S subunits on which protein synthesis initiation begins. The sequence is that of Translation initiation factor IF-3 from Borrelia garinii subsp. bavariensis (strain ATCC BAA-2496 / DSM 23469 / PBi) (Borreliella bavariensis).